Reading from the N-terminus, the 418-residue chain is Mitochondrial outer membrane protein SLC25A46 (418 aa).

Phosphoserine occurs at positions 32 and 35. Phosphothreonine is present on threonine 45. The segment at 46–96 (PPDIPGSRNLHWGEKSPSYGVPSAPPTLEGPAEEPFPGGGDGPRPGRSSEQ) is disordered. One copy of the Solcar 1 repeat lies at 96–187 (QLNRFAGFGI…GIISEFTPLP (92 aa)). A run of 6 helical transmembrane segments spans residues 103–123 (FGIGLASLFTENVLAHPCIVL), 167–187 (FIVQGVTLGAEGIISEFTPLP), 202–222 (HLLLKCLTYMVAMPFYSASLI), 258–278 (LLPLFSLIFPTVLHGVLHYII), 314–334 (FPELIANFAASLCSDVILYPL), and 382–402 (VFGFYKGFGAVIIQYTLHATI). One copy of the Solcar 2 repeat lies at 311–416 (DAYFPELIAN…KIIYSTLLQN (106 aa)).

This sequence belongs to the mitochondrial carrier (TC 2.A.29) family. In terms of assembly, associates with the mitochondrial contact site and cristae organizing system (MICOS) complex. May associate with the endoplasmic reticulum membrane protein complex (EMC). In terms of tissue distribution, widely expressed. Highly expressed in hindbrain, spinal cord and brain coronal sections containing corpus callosum, fornix, optic chiasm, thalamus, hypothalamus, midbrain, pons and cerebellum.

It localises to the mitochondrion outer membrane. Its function is as follows. Transmembrane protein of the mitochondrial outer membrane that controls mitochondrial organization. May regulate the assembly of the MICOS (mitochondrial contact site and cristae organizing system) complex which is essential to the biogenesis and dynamics of mitochondrial cristae, the inwards folds of the inner mitochondrial membrane. Through its interaction with the EMC (endoplasmic reticulum membrane protein complex), could regulate mitochondrial lipid homeostasis and thereby mitochondrial fission. The polypeptide is Mitochondrial outer membrane protein SLC25A46 (Rattus norvegicus (Rat)).